A 561-amino-acid chain; its full sequence is Type 2 DNA topoisomerase 6 subunit B (561 aa).

ATP contacts are provided by residues asparagine 46, aspartate 78, 99-100 (TK), 109-116 (GQQGIGIS), and lysine 471.

Belongs to the TOP6B family. In terms of assembly, homodimer. Heterotetramer of two Top6A and two Top6B chains.

It carries out the reaction ATP-dependent breakage, passage and rejoining of double-stranded DNA.. Its function is as follows. Relaxes both positive and negative superturns and exhibits a strong decatenase activity. This is Type 2 DNA topoisomerase 6 subunit B from Thermococcus gammatolerans (strain DSM 15229 / JCM 11827 / EJ3).